A 239-amino-acid polypeptide reads, in one-letter code: Putative transcriptional regulator of 2-aminoethylphosphonate degradation operons (239 aa).

One can recognise an HTH gntR-type domain in the interval 8 to 76 (IPQYLLIKAQ…DRRGWFVTPE (69 aa)). A DNA-binding region (H-T-H motif) is located at residues 36-55 (ERELCAIFNTTRITIRESLA).

The chain is Putative transcriptional regulator of 2-aminoethylphosphonate degradation operons (phnR) from Salmonella paratyphi A (strain ATCC 9150 / SARB42).